Consider the following 123-residue polypeptide: Small ribosomal subunit protein uS12 (123 aa).

Asp89 bears the 3-methylthioaspartic acid mark.

This sequence belongs to the universal ribosomal protein uS12 family. As to quaternary structure, part of the 30S ribosomal subunit. Contacts proteins S8 and S17. May interact with IF1 in the 30S initiation complex.

Its function is as follows. With S4 and S5 plays an important role in translational accuracy. In terms of biological role, interacts with and stabilizes bases of the 16S rRNA that are involved in tRNA selection in the A site and with the mRNA backbone. Located at the interface of the 30S and 50S subunits, it traverses the body of the 30S subunit contacting proteins on the other side and probably holding the rRNA structure together. The combined cluster of proteins S8, S12 and S17 appears to hold together the shoulder and platform of the 30S subunit. This is Small ribosomal subunit protein uS12 from Chelativorans sp. (strain BNC1).